The following is a 370-amino-acid chain: Biotin synthase (370 aa).

The 228-residue stretch at 56–283 (NAVQVSTLLS…KSHVRLSAGR (228 aa)) folds into the Radical SAM core domain. [4Fe-4S] cluster contacts are provided by Cys-71, Cys-75, and Cys-78. Residues Cys-115, Cys-146, Cys-206, and Arg-278 each coordinate [2Fe-2S] cluster. A compositionally biased stretch (basic and acidic residues) spans 327–344 (GLHPEPSDPHADDAHRDD). A disordered region spans residues 327–346 (GLHPEPSDPHADDAHRDDEQ).

Belongs to the radical SAM superfamily. Biotin synthase family. Homodimer. The cofactor is [4Fe-4S] cluster. [2Fe-2S] cluster is required as a cofactor.

It carries out the reaction (4R,5S)-dethiobiotin + (sulfur carrier)-SH + 2 reduced [2Fe-2S]-[ferredoxin] + 2 S-adenosyl-L-methionine = (sulfur carrier)-H + biotin + 2 5'-deoxyadenosine + 2 L-methionine + 2 oxidized [2Fe-2S]-[ferredoxin]. The protein operates within cofactor biosynthesis; biotin biosynthesis; biotin from 7,8-diaminononanoate: step 2/2. Functionally, catalyzes the conversion of dethiobiotin (DTB) to biotin by the insertion of a sulfur atom into dethiobiotin via a radical-based mechanism. The chain is Biotin synthase from Chromohalobacter salexigens (strain ATCC BAA-138 / DSM 3043 / CIP 106854 / NCIMB 13768 / 1H11).